Reading from the N-terminus, the 130-residue chain is uncharacterized protein (130 aa).

The Cytoplasmic portion of the chain corresponds to 1–58 (MREQLKLFTREIVDFTFLILSGFDYYQTLLISSNSSKKRPKDSSLLSEKKKKKKKKKK). Positions 34 to 57 (NSSKKRPKDSSLLSEKKKKKKKKK) are disordered. The helical transmembrane segment at 59–79 (DVLSYLSYLKDLPFVPFLFWQ) threads the bilayer. The Extracellular segment spans residues 80–94 (PGYSQREKNPRQHSL). The helical transmembrane segment at 95-115 (FIMTITKPGMISMADMNYVVS) threads the bilayer. Topologically, residues 116-130 (KNRSLNRPAERGGNR) are cytoplasmic.

Its subcellular location is the membrane. This is an uncharacterized protein from Saccharomyces cerevisiae (strain ATCC 204508 / S288c) (Baker's yeast).